The primary structure comprises 314 residues: tRNA pseudouridine synthase B (314 aa).

D54 acts as the Nucleophile in catalysis.

The protein belongs to the pseudouridine synthase TruB family. Type 1 subfamily.

The enzyme catalyses uridine(55) in tRNA = pseudouridine(55) in tRNA. In terms of biological role, responsible for synthesis of pseudouridine from uracil-55 in the psi GC loop of transfer RNAs. This Ralstonia nicotianae (strain ATCC BAA-1114 / GMI1000) (Ralstonia solanacearum) protein is tRNA pseudouridine synthase B.